The sequence spans 142 residues: MVTIIDGEGLVLGRLASTVSKRLLDGEEITIINAEKIIISGNKDFIYAKYKQRVDRASISNPRDLGPKYPRRPDDIFRRTVRGMIPYRKAHGRAAYKNLKVNVGIPKELEGQEVVEVEQAQPKNITKSMELGTVSKLLGAKF.

It belongs to the universal ribosomal protein uL13 family. Part of the 50S ribosomal subunit.

This protein is one of the early assembly proteins of the 50S ribosomal subunit, although it is not seen to bind rRNA by itself. It is important during the early stages of 50S assembly. This Methanosphaera stadtmanae (strain ATCC 43021 / DSM 3091 / JCM 11832 / MCB-3) protein is Large ribosomal subunit protein uL13.